Consider the following 500-residue polypeptide: Endothelial lipase (500 aa).

Residues 1–20 (MSNSVPLLCFWSLCYCFAAG) form the signal peptide. Cys64 and Cys77 are disulfide-bonded. 2 N-linked (GlcNAc...) asparagine glycosylation sites follow: Asn80 and Asn136. The Nucleophile role is filled by Ser169. Asp193 acts as the Charge relay system in catalysis. The cysteines at positions 252 and 272 are disulfide-linked. The Charge relay system role is filled by His274. Disulfide bonds link Cys297–Cys316 and Cys308–Cys311. 325-337 (KMRNKRNSKMYLK) serves as a coordination point for heparin. Residues 347 to 482 (YHYQMKIHVF…SPGRELWFRK (136 aa)) form the PLAT domain. N-linked (GlcNAc...) asparagine glycans are attached at residues Asn393, Asn469, and Asn491. An intrachain disulfide couples Cys463 to Cys483.

The protein belongs to the AB hydrolase superfamily. Lipase family. In terms of assembly, head to tail homodimer. In terms of tissue distribution, high level of expression in the liver, placenta, lung, thyroid, kidney, testis and in the corpus luteum of the ovary. Expressed also in coronary artery endothelial cells, umbilical vein endothelial cells and in hepatocytes and osteosarcoma cell lines. Not detected in heart, brain and muscle.

The protein localises to the secreted. It catalyses the reaction a triacylglycerol + H2O = a diacylglycerol + a fatty acid + H(+). The enzyme catalyses a 1,2-diacyl-sn-glycero-3-phosphocholine + H2O = a 2-acyl-sn-glycero-3-phosphocholine + a fatty acid + H(+). It carries out the reaction 1,2,3-tri-(9Z-octadecenoyl)-glycerol + H2O = di-(9Z)-octadecenoylglycerol + (9Z)-octadecenoate + H(+). The catalysed reaction is 1,2,3-tributanoylglycerol + H2O = dibutanoylglycerol + butanoate + H(+). It catalyses the reaction 1,2-dihexadecanoyl-sn-glycero-3-phosphocholine + H2O = hexadecanoyl-sn-glycero-3-phosphocholine + hexadecanoate + H(+). Inhibited by serum and NaCl. Functionally, exerts both phospholipase and triglyceride lipase activities. More active as a phospholipase than a triglyceride lipase. Hydrolyzes triglycerides, both with short-chain fatty acyl groups (tributyrin) and long-chain fatty acyl groups (triolein) with similar levels of activity toward both types of substrates. Hydrolyzes high density lipoproteins (HDL) more efficiently than other lipoproteins. In Homo sapiens (Human), this protein is Endothelial lipase (LIPG).